The sequence spans 184 residues: Adenine phosphoribosyltransferase 2 (184 aa).

This sequence belongs to the purine/pyrimidine phosphoribosyltransferase family. In terms of assembly, homodimer.

Its subcellular location is the cytoplasm. It catalyses the reaction AMP + diphosphate = 5-phospho-alpha-D-ribose 1-diphosphate + adenine. It functions in the pathway purine metabolism; AMP biosynthesis via salvage pathway; AMP from adenine: step 1/1. Functionally, catalyzes a salvage reaction resulting in the formation of AMP, that is energically less costly than de novo synthesis. The protein is Adenine phosphoribosyltransferase 2 of Rhizobium etli (strain ATCC 51251 / DSM 11541 / JCM 21823 / NBRC 15573 / CFN 42).